The following is a 432-amino-acid chain: 3-phosphoshikimate 1-carboxyvinyltransferase (432 aa).

Lys23, Ser24, and Arg28 together coordinate 3-phosphoshikimate. A phosphoenolpyruvate-binding site is contributed by Lys23. Phosphoenolpyruvate contacts are provided by Gly95 and Arg123. Ser167, Gln169, Asp317, and Lys344 together coordinate 3-phosphoshikimate. Gln169 serves as a coordination point for phosphoenolpyruvate. Asp317 acts as the Proton acceptor in catalysis. Arg348 and Arg390 together coordinate phosphoenolpyruvate.

This sequence belongs to the EPSP synthase family. In terms of assembly, monomer.

It is found in the cytoplasm. It catalyses the reaction 3-phosphoshikimate + phosphoenolpyruvate = 5-O-(1-carboxyvinyl)-3-phosphoshikimate + phosphate. Its pathway is metabolic intermediate biosynthesis; chorismate biosynthesis; chorismate from D-erythrose 4-phosphate and phosphoenolpyruvate: step 6/7. Functionally, catalyzes the transfer of the enolpyruvyl moiety of phosphoenolpyruvate (PEP) to the 5-hydroxyl of shikimate-3-phosphate (S3P) to produce enolpyruvyl shikimate-3-phosphate and inorganic phosphate. In Staphylococcus aureus (strain N315), this protein is 3-phosphoshikimate 1-carboxyvinyltransferase.